A 233-amino-acid chain; its full sequence is MAKLTKRARVIREKVDATKLYDINEAVVLLQELATAKFVESVDVAVNLGIDPRKSDQNVRGATVLPHGTGRDVRVAVFTQGANAEAAIAAGAELVGMEDLAEKVKAGEMNFDVVIASPDAMRVVGMLGQILGPRGLMPNPKTGTVTPNVAEAVKNAKAGQVRYRNDKNGIIHTTIGKVTFTTEQLKENLESLVSALKKAKPAVAKGIYVKKISISTTMGAGVAIDQGSLEEAK.

Belongs to the universal ribosomal protein uL1 family. As to quaternary structure, part of the 50S ribosomal subunit.

Binds directly to 23S rRNA. The L1 stalk is quite mobile in the ribosome, and is involved in E site tRNA release. Functionally, protein L1 is also a translational repressor protein, it controls the translation of the L11 operon by binding to its mRNA. This chain is Large ribosomal subunit protein uL1, found in Shewanella frigidimarina (strain NCIMB 400).